A 499-amino-acid chain; its full sequence is uncharacterized protein (499 aa).

FAD contacts are provided by residues 6–35 (EAVI…VIER) and 272–282 (YRDGRIFLAGD).

Belongs to the PheA/TfdB FAD monooxygenase family. FAD is required as a cofactor.

This is an uncharacterized protein from Bacillus subtilis (strain 168).